The chain runs to 335 residues: Acetyl-coenzyme A carboxylase carboxyl transferase subunit alpha (335 aa).

The CoA carboxyltransferase C-terminal domain maps to 48 to 308 (TLELKVDALR…KEILIEELKA (261 aa)).

This sequence belongs to the AccA family. In terms of assembly, acetyl-CoA carboxylase is a heterohexamer composed of biotin carboxyl carrier protein (AccB), biotin carboxylase (AccC) and two subunits each of ACCase subunit alpha (AccA) and ACCase subunit beta (AccD).

The protein resides in the cytoplasm. It carries out the reaction N(6)-carboxybiotinyl-L-lysyl-[protein] + acetyl-CoA = N(6)-biotinyl-L-lysyl-[protein] + malonyl-CoA. Its pathway is lipid metabolism; malonyl-CoA biosynthesis; malonyl-CoA from acetyl-CoA: step 1/1. In terms of biological role, component of the acetyl coenzyme A carboxylase (ACC) complex. First, biotin carboxylase catalyzes the carboxylation of biotin on its carrier protein (BCCP) and then the CO(2) group is transferred by the carboxyltransferase to acetyl-CoA to form malonyl-CoA. This chain is Acetyl-coenzyme A carboxylase carboxyl transferase subunit alpha, found in Pelodictyon phaeoclathratiforme (strain DSM 5477 / BU-1).